We begin with the raw amino-acid sequence, 282 residues long: 4-diphosphocytidyl-2-C-methyl-D-erythritol kinase (282 aa).

Residue Lys9 is part of the active site. Residue 98 to 108 (PMGGGLGGGSS) participates in ATP binding. The active site involves Asp140.

Belongs to the GHMP kinase family. IspE subfamily. As to quaternary structure, homodimer.

The enzyme catalyses 4-CDP-2-C-methyl-D-erythritol + ATP = 4-CDP-2-C-methyl-D-erythritol 2-phosphate + ADP + H(+). Its pathway is isoprenoid biosynthesis; isopentenyl diphosphate biosynthesis via DXP pathway; isopentenyl diphosphate from 1-deoxy-D-xylulose 5-phosphate: step 3/6. Catalyzes the phosphorylation of the position 2 hydroxy group of 4-diphosphocytidyl-2C-methyl-D-erythritol. The protein is 4-diphosphocytidyl-2-C-methyl-D-erythritol kinase of Salmonella schwarzengrund (strain CVM19633).